A 1029-amino-acid polypeptide reads, in one-letter code: Protein SUPPRESSOR OF PHYA-105 1 (1029 aa).

The tract at residues 42–69 is disordered; that stretch reads SETANSDCPGSSAHRNVDLTKPPPPEEA. The 342-residue stretch at 188 to 529 folds into the Protein kinase domain; it reads VQMKTPVSSS…ARDILKSELI (342 aa). Residues 194-202 and K216 each bind ATP; that span reads VSSSNFSQL. The disordered stretch occupies residues 213 to 269; it reads VVGKNQETPPEFVSDQDLGSKEKKLDISKSPTPHDVLPLKSSPKGNGMVSHGDGNHS. The segment covering 230 to 239 has biased composition (basic and acidic residues); sequence LGSKEKKLDI. D316 (proton acceptor) is an active-site residue. The interval 347–392 is disordered; it reads EDLNRRRPVVEESSSGGRDSKKRKMDLHLNSPGNQLQATSTGRPFK. The span at 377 to 388 shows a compositional bias: polar residues; it reads SPGNQLQATSTG. A coiled-coil region spans residues 557–589; it reads VQKKKKASKLLQDIQTLEDDIKEAERRYSSNVS. The tract at residues 653 to 679 is disordered; it reads ARSDKTLKDRDRCSENQNENQDMSTKG. Basic and acidic residues predominate over residues 654–666; the sequence is RSDKTLKDRDRCS. Positions 667-679 are enriched in polar residues; the sequence is ENQNENQDMSTKG. 7 WD repeats span residues 714–753, 763–803, 806–846, 848–888, 892–930, 932–971, and 997–1029; these read NSAS…NESV, VNKS…GFSQ, EHQK…SLGT, WSPA…TPWC, GHEK…SSGL, PGAC…YSYY, and DNGQ…LKLV. Positions 866 to 881 match the DWD box motif; it reads LAFGSADYKVYCYDLR.

As to quaternary structure, interacts with CO, COP1, HFR1, HY5 and PHYA. Light induces dissociation of the SPA1/COP1 complex. Binds to CRY1 in response to blue light, this interaction prevents SPA1/COP1 complex formation but stimulate CRY2/COP1 complex, and thus avoid COP1-dependent degradation of the transcription factor HY5 by the proteasome and promotes hypocotyl elongation.

The protein localises to the nucleus speckle. It is found in the nucleus. The protein resides in the PML body. In terms of biological role, controls normal photoperiodic flowering and regulates circadian rhythms. Required for suppression of photomorphogenesis in dark-grown seedlings and for normal elongation growth of adult plants. Integral component of the COP1/SPA E3 ubiquitin-protein ligase complex. Involved in HY5, HFR1, LAF1 and CO degradation. In Arabidopsis thaliana (Mouse-ear cress), this protein is Protein SUPPRESSOR OF PHYA-105 1 (SPA1).